We begin with the raw amino-acid sequence, 503 residues long: Opine oxidase subunit A (503 aa).

It to T-protein and to dimethylglycine dehydrogenase. Heterodimer of a subunit A and a subunit B.

The protein operates within opine metabolism; octopine degradation. Oxidative cleavage of octopine into L-arginine and pyruvate. The sequence is that of Opine oxidase subunit A (ooxA) from Agrobacterium tumefaciens (strain Ach5).